A 378-amino-acid polypeptide reads, in one-letter code: Chaperone protein DnaJ (378 aa).

Residues 5–70 form the J domain; sequence DYYETLGVSQ…QKRAAYDQYG (66 aa). The CR-type zinc-finger motif lies at 134–212; that stretch reads GKSLEIKVPT…CRGQGRVEKT (79 aa). Zn(2+) contacts are provided by Cys147, Cys150, Cys164, Cys167, Cys186, Cys189, Cys200, and Cys203. CXXCXGXG motif repeat units follow at residues 147–154, 164–171, 186–193, and 200–207; these read CEPCDGSG, CSTCHGHG, CPTCSGKG, and CTSCRGQG.

The protein belongs to the DnaJ family. In terms of assembly, homodimer. Zn(2+) serves as cofactor.

The protein localises to the cytoplasm. Its function is as follows. Participates actively in the response to hyperosmotic and heat shock by preventing the aggregation of stress-denatured proteins and by disaggregating proteins, also in an autonomous, DnaK-independent fashion. Unfolded proteins bind initially to DnaJ; upon interaction with the DnaJ-bound protein, DnaK hydrolyzes its bound ATP, resulting in the formation of a stable complex. GrpE releases ADP from DnaK; ATP binding to DnaK triggers the release of the substrate protein, thus completing the reaction cycle. Several rounds of ATP-dependent interactions between DnaJ, DnaK and GrpE are required for fully efficient folding. Also involved, together with DnaK and GrpE, in the DNA replication of plasmids through activation of initiation proteins. The chain is Chaperone protein DnaJ from Colwellia psychrerythraea (strain 34H / ATCC BAA-681) (Vibrio psychroerythus).